We begin with the raw amino-acid sequence, 563 residues long: Solute carrier family 22 member 6 (563 aa).

Topologically, residues 1-9 (MAFNDLLQQ) are cytoplasmic. A helical transmembrane segment spans residues 10–30 (VGGVGRFQQIQVTLVVLPLLL). Topologically, residues 31–135 (MASHNTLQNF…LVCSHRALRQ (105 aa)) are extracellular. N-linked (GlcNAc...) asparagine glycans are attached at residues N39, N56, N92, N97, and N113. The chain crosses the membrane as a helical span at residues 136-156 (LAQSLYMVGVLLGAMVFGYLA). Residues 157-164 (DRLGRRKV) lie on the Cytoplasmic side of the membrane. The helical transmembrane segment at 165–187 (LILNYLQTAVSGTCAAFAPNFPI) threads the bilayer. The Extracellular portion of the chain corresponds to 188 to 190 (YCA). The helical transmembrane segment at 191-213 (FRLLSGMALAGISLNCMTLNVEW) threads the bilayer. The Cytoplasmic portion of the chain corresponds to 214–224 (MPIHTRACVGT). A helical transmembrane segment spans residues 225 to 245 (LIGYVYSLGQFLLAGVAYAVP). Residues 246–248 (HWR) lie on the Extracellular side of the membrane. A helical membrane pass occupies residues 249 to 269 (HLQLLVSAPFFAFFIYSWFFI). Over 270–337 (ESARWHSSSG…ELLRCPTLRH (68 aa)) the chain is Cytoplasmic. Residues 338-358 (LFLCLSMLWFATSFAYYGLVM) traverse the membrane as a helical segment. Topologically, residues 359-368 (DLQGFGVSIY) are extracellular. A helical membrane pass occupies residues 369–389 (LIQVIFGAVDLPAKLVGFLVI). The Cytoplasmic segment spans residues 390–395 (NSLGRR). The chain crosses the membrane as a helical span at residues 396 to 416 (PAQMAALLLAGICILLNGVIP). Over 417–425 (QDQSIVRTS) the chain is Extracellular. Residues 426-446 (LAVLGKGCLAASFNCIFLYTG) traverse the membrane as a helical segment. The Cytoplasmic portion of the chain corresponds to 447-455 (ELYPTMIRQ). A helical transmembrane segment spans residues 456–475 (TGMGMGSTMARVGSIVSPLV). At 476–484 (SMTAELYPS) the chain is on the extracellular side. A helical membrane pass occupies residues 485–505 (MPLFIYGAVPVAASAVTVLLP). The Cytoplasmic segment spans residues 506 to 563 (ETLGQPLPDTVQDLESRWAPTQKEAGIYPRKGKQTRQQQEHQKYMVPLQASAQEKNGL). Positions 525–563 (PTQKEAGIYPRKGKQTRQQQEHQKYMVPLQASAQEKNGL) are disordered.

This sequence belongs to the major facilitator (TC 2.A.1) superfamily. Organic cation transporter (TC 2.A.1.19) family. Glycosylated. Glycosylation at Asn-113 may occur at a secondary level. Glycosylation is necessary for proper targeting of the transporter to the plasma membrane. Strongly expressed in kidney. Expressed at lower level in liver, skeletal muscle, brain and placenta. In kidney, found at the basolateral membrane of the proximal tubule. In testis, primarily localized to the basal membrane of Sertoli cells and weakly expressed in Leydig cells and vascular endothelial cells.

The protein resides in the basolateral cell membrane. It localises to the basal cell membrane. The catalysed reaction is (6R)-L-erythro-5,6,7,8-tetrahydrobiopterin(out) + a dicarboxylate(in) = (6R)-L-erythro-5,6,7,8-tetrahydrobiopterin(in) + a dicarboxylate(out). It carries out the reaction L-erythro-7,8-dihydrobiopterin(out) + a dicarboxylate(in) = L-erythro-7,8-dihydrobiopterin(in) + a dicarboxylate(out). It catalyses the reaction L-sepiapterin(out) + a dicarboxylate(in) = L-sepiapterin(in) + a dicarboxylate(out). The enzyme catalyses prostaglandin F2alpha(out) + a dicarboxylate(in) = prostaglandin F2alpha(in) + a dicarboxylate(out). The catalysed reaction is prostaglandin E2(out) + a dicarboxylate(in) = prostaglandin E2(in) + a dicarboxylate(out). It carries out the reaction 3',5'-cyclic AMP(out) + a dicarboxylate(in) = 3',5'-cyclic AMP(in) + a dicarboxylate(out). It catalyses the reaction 3',5'-cyclic GMP(out) + a dicarboxylate(in) = 3',5'-cyclic GMP(in) + a dicarboxylate(out). The enzyme catalyses urate(out) + a dicarboxylate(in) = urate(in) + a dicarboxylate(out). The catalysed reaction is kynurenate(out) + glutarate(in) = kynurenate(in) + glutarate(out). It carries out the reaction (indol-3-yl)acetate(out) + a dicarboxylate(in) = (indol-3-yl)acetate(in) + a dicarboxylate(out). It catalyses the reaction indoxyl sulfate(out) + a dicarboxylate(in) = indoxyl sulfate(in) + a dicarboxylate(out). The enzyme catalyses N-benzoylglycine(out) + a dicarboxylate(in) = N-benzoylglycine(in) + a dicarboxylate(out). The catalysed reaction is 3-carboxy-4-methyl-5-propyl-2-furanpropanoate(out) + a dicarboxylate(in) = 3-carboxy-4-methyl-5-propyl-2-furanpropanoate(in) + a dicarboxylate(out). Its function is as follows. Secondary active transporter that functions as a Na(+)-independent organic anion (OA)/dicarboxylate antiporter where the uptake of one molecule of OA into the cell is coupled with an efflux of one molecule of intracellular dicarboxylate such as 2-oxoglutarate or glutarate. Mediates the uptake of OA across the basolateral side of proximal tubule epithelial cells, thereby contributing to the renal elimination of endogenous OA from the systemic circulation into the urine. Functions as a biopterin transporters involved in the uptake and the secretion of coenzymes tetrahydrobiopterin (BH4), dihydrobiopterin (BH2) and sepiapterin to urine, thereby determining baseline levels of blood biopterins. Transports prostaglandin E2 (PGE2) and prostaglandin F2-alpha (PGF2-alpha) and may contribute to their renal excretion. Also mediates the uptake of cyclic nucleotides such as cAMP and cGMP. Involved in the transport of neuroactive tryptophan metabolites kynurenate (KYNA) and xanthurenate (XA) and may contribute to their secretion from the brain. May transport glutamate. Also involved in the disposition of uremic toxins and potentially toxic xenobiotics by the renal organic anion secretory pathway, helping reduce their undesired toxicological effects on the body. Uremic toxins include the indoxyl sulfate (IS), hippurate/N-benzoylglycine (HA), indole acetate (IA), 3-carboxy-4- methyl-5-propyl-2-furanpropionate (CMPF) and urate. Xenobiotics include the mycotoxin ochratoxin (OTA). May also contribute to the transport of organic compounds in testes across the blood-testis-barrier. The polypeptide is Solute carrier family 22 member 6 (Homo sapiens (Human)).